Here is a 295-residue protein sequence, read N- to C-terminus: Ribosomal RNA small subunit methyltransferase H (295 aa).

S-adenosyl-L-methionine is bound by residues 36 to 38, D56, L90, D104, and H111; that span reads GGH.

It belongs to the methyltransferase superfamily. RsmH family.

The protein localises to the cytoplasm. The enzyme catalyses cytidine(1402) in 16S rRNA + S-adenosyl-L-methionine = N(4)-methylcytidine(1402) in 16S rRNA + S-adenosyl-L-homocysteine + H(+). Its function is as follows. Specifically methylates the N4 position of cytidine in position 1402 (C1402) of 16S rRNA. The sequence is that of Ribosomal RNA small subunit methyltransferase H from Dictyoglomus turgidum (strain DSM 6724 / Z-1310).